Reading from the N-terminus, the 257-residue chain is MYSVCDVVRDAVAQSHLCACPNDKLPQCKGVTKAPPECSVFHLAKLQDTKFKWKYTLDPLKAQKLDQINKDIEKDAITLKLIYGTELSPEDVEWWKMQRCLINKNTGAKGGQFAHKYLERQDLELLGYSPTSLIGGDLMFTALPDKVLRTIPVVWDRFLNPAMMIFFLIILLCIILGIFYVLVRNTLRRKQKSKQHQMEIKRFIKEKEQDPYIHTSFESWPADPNKEWKELIPVYEAQGYCMADYRKKLGMPPVPNC.

Helical transmembrane passes span 123–143 (LELL…FTAL) and 163–183 (MMIF…YVLV).

Belongs to the asfivirus C257R family.

The protein resides in the host membrane. Its subcellular location is the virion. The protein is Transmembrane protein C257L of Ornithodoros (relapsing fever ticks).